An 813-amino-acid polypeptide reads, in one-letter code: Fibroblast growth factor receptor 2 (813 aa).

Residues 1–14 form the signal peptide; it reads MLLLALLAFLLVSR. The Extracellular segment spans residues 18–367; it reads RPSYSMVDDT…EDNPVPYYME (350 aa). The Ig-like C2-type 1 domain occupies 21–117; that stretch reads YSMVDDTTPE…NSHFFHVNVT (97 aa). An intrachain disulfide couples Cys-58 to Cys-103. N-linked (GlcNAc...) asparagine glycans are attached at residues Asn-79 and Asn-115. The interval 119–143 is disordered; the sequence is ASSSGDDEDDNDGSEDFTNDNNNIR. A compositionally biased stretch (acidic residues) spans 123 to 136; it reads GDDEDDNDGSEDFT. Ig-like C2-type domains follow at residues 145–237 and 246–348; these read PYWT…YHLD and PILQ…AWLT. Residues 152-169 form a heparin-binding region; it reads KMEKKLHAVSAANTVKLR. A disulfide bond links Cys-170 and Cys-221. Asn-231, Asn-255, Asn-287, Asn-308, and Asn-321 each carry an N-linked (GlcNAc...) asparagine glycan. Cys-268 and Cys-332 form a disulfide bridge. A helical membrane pass occupies residues 368–388; sequence IGIYSTGIFIIFCMVVVCVVC. The Cytoplasmic segment spans residues 389–813; sequence RMRQGAKKKK…FQHVNGVVKT (425 aa). Tyr-456 carries the phosphotyrosine; by autocatalysis modification. In terms of domain architecture, Protein kinase spans 471-760; that stretch reads LTLGKPLGEG…LTLTTNEEYL (290 aa). ATP is bound by residues 477–485, Lys-507, 555–557, and Asn-561; these read LGEGCFGQV and EYA. A Phosphotyrosine; by autocatalysis modification is found at Tyr-576. Asp-616 acts as the Proton acceptor in catalysis. Phosphotyrosine; by autocatalysis occurs at positions 646, 647, and 759. Positions 771-792 are enriched in low complexity; it reads PSFPDSSCSASSSSGDDSVFSP. Residues 771 to 801 are disordered; it reads PSFPDSSCSASSSSGDDSVFSPDPMPHDPCL.

Belongs to the protein kinase superfamily. Tyr protein kinase family. Fibroblast growth factor receptor subfamily. As to quaternary structure, monomer. Homodimer after ligand binding. Autophosphorylated. Binding of FGF family members together with heparan sulfate proteoglycan or heparin promotes receptor dimerization and autophosphorylation on tyrosine residues. Autophosphorylation occurs in trans between the two FGFR molecules present in the dimer. Post-translationally, N-glycosylated in the endoplasmic reticulum. The N-glycan chains undergo further maturation to an Endo H-resistant form in the Golgi apparatus. In terms of processing, ubiquitinated. FGFR2 is rapidly ubiquitinated after autophosphorylation, leading to internalization and degradation. Subject to degradation both in lysosomes and by the proteasome. As to expression, expressed in the anterior neural plate in early neurula stage embryos. Later in development, the protein is also expressed in the eye anlagen, midbrain-hindbrain boundary and otic vesicle.

Its subcellular location is the cell membrane. The protein resides in the golgi apparatus. It localises to the cytoplasmic vesicle. It catalyses the reaction L-tyrosyl-[protein] + ATP = O-phospho-L-tyrosyl-[protein] + ADP + H(+). With respect to regulation, present in an inactive conformation in the absence of bound ligand. Ligand binding leads to dimerization and activation by autophosphorylation on tyrosine residues. Tyrosine-protein kinase that acts as a cell-surface receptor for fibroblast growth factors and plays an essential role in the regulation of cell proliferation, differentiation, migration and apoptosis, and in the regulation of embryonic development. Required for normal embryonic patterning, limb bud development, lung morphogenesis, osteogenesis and skin development. Plays an essential role in the regulation of osteoblast differentiation, proliferation and apoptosis, and is required for normal skeleton development. Promotes cell proliferation in keratinocytes and immature osteoblasts, but promotes apoptosis in differentiated osteoblasts. Phosphorylates PLCG1, FRS2 and PAK4. Ligand binding leads to the activation of several signaling cascades. Activation of PLCG1 leads to the production of the cellular signaling molecules diacylglycerol and inositol 1,4,5-trisphosphate. Phosphorylation of FRS2 triggers recruitment of GRB2, GAB1, PIK3R1 and SOS1, and mediates activation of RAS, MAPK1/ERK2, MAPK3/ERK1 and the MAP kinase signaling pathway, as well as of the AKT1 signaling pathway. FGFR2 signaling is down-regulated by ubiquitination, internalization and degradation. Mutations that lead to constitutive kinase activation or impair normal FGFR2 maturation, internalization and degradation lead to aberrant signaling. Over-expressed FGFR2 promotes activation of STAT1. The chain is Fibroblast growth factor receptor 2 (fgfr2) from Xenopus laevis (African clawed frog).